A 525-amino-acid polypeptide reads, in one-letter code: Chromosomal replication initiator protein DnaA (525 aa).

Positions 1–71 (MNDFWQHCSA…SDLARDFWNA (71 aa)) are domain I, interacts with DnaA modulators. The tract at residues 71 to 188 (APIEVQFVLD…GEADSMYERS (118 aa)) is domain II. The tract at residues 160 to 182 (AAAGRRTWRPGPGAAPANGGEAD) is disordered. Residues 169-181 (PGPGAAPANGGEA) show a composition bias toward low complexity. Residues 189–405 (KLNPVLTFDN…GALRKILAYS (217 aa)) are domain III, AAA+ region. ATP-binding residues include Gly-233, Gly-235, Lys-236, and Thr-237. The domain IV, binds dsDNA stretch occupies residues 406–525 (KFHGREISIE…LHVLEQTLKG (120 aa)).

Belongs to the DnaA family. Oligomerizes as a right-handed, spiral filament on DNA at oriC.

The protein localises to the cytoplasm. In terms of biological role, plays an essential role in the initiation and regulation of chromosomal replication. ATP-DnaA binds to the origin of replication (oriC) to initiate formation of the DNA replication initiation complex once per cell cycle. Binds the DnaA box (a 9 base pair repeat at the origin) and separates the double-stranded (ds)DNA. Forms a right-handed helical filament on oriC DNA; dsDNA binds to the exterior of the filament while single-stranded (ss)DNA is stabiized in the filament's interior. The ATP-DnaA-oriC complex binds and stabilizes one strand of the AT-rich DNA unwinding element (DUE), permitting loading of DNA polymerase. After initiation quickly degrades to an ADP-DnaA complex that is not apt for DNA replication. Binds acidic phospholipids. This chain is Chromosomal replication initiator protein DnaA, found in Burkholderia ambifaria (strain ATCC BAA-244 / DSM 16087 / CCUG 44356 / LMG 19182 / AMMD) (Burkholderia cepacia (strain AMMD)).